The primary structure comprises 108 residues: Mitochondrial pyruvate carrier 4 (108 aa).

3 consecutive transmembrane segments (helical) span residues 19-35, 51-67, and 74-90; these read IHFWAPTFKWGISIANI, IAVTCTGVIWSRYSMVI, and LFSVNVAMAGTGIYQLA.

The protein belongs to the mitochondrial pyruvate carrier (MPC) (TC 2.A.105) family.

The protein resides in the mitochondrion inner membrane. In terms of biological role, mediates the uptake of pyruvate into mitochondria. This Arabidopsis thaliana (Mouse-ear cress) protein is Mitochondrial pyruvate carrier 4.